We begin with the raw amino-acid sequence, 88 residues long: Cell division topological specificity factor (88 aa).

The protein belongs to the MinE family.

In terms of biological role, prevents the cell division inhibition by proteins MinC and MinD at internal division sites while permitting inhibition at polar sites. This ensures cell division at the proper site by restricting the formation of a division septum at the midpoint of the long axis of the cell. This Aeromonas salmonicida (strain A449) protein is Cell division topological specificity factor.